The primary structure comprises 359 residues: Small ribosomal subunit protein uS2 (359 aa).

The disordered stretch occupies residues 232-295 (EPQFKPSEFT…PVGTEPVATT (64 aa)). Basic and acidic residues-rich tracts occupy residues 239–250 (EFTRRDGDENRN) and 257–273 (DNRR…DTHY).

This sequence belongs to the universal ribosomal protein uS2 family.

The sequence is that of Small ribosomal subunit protein uS2 (rpsB) from Spiroplasma citri.